We begin with the raw amino-acid sequence, 186 residues long: MNVDVLIGEILTLSMMAFALGMDAFSVGLGMGMAKLKRNQVFQIGVIIGLFHVIMPLGGMIAGQFLSGALGALAGYIGGALLLVLGIQMIVASFNKSGEQIISPHGFGLFVFAVGVSLDSFSVGLSLGLYGTKPILTIFLFGLFSMVLTWAGLLLGKKVQTWLGAYSEALGGAILLSFGLKLLLPI.

The next 6 helical transmembrane spans lie at 5-25 (VLIG…MDAF), 41-61 (VFQI…GGMI), 72-92 (ALAG…MIVA), 107-127 (FGLF…GLSL), 135-155 (ILTI…GLLL), and 166-186 (YSEA…LLPI).

The protein belongs to the MntP (TC 9.B.29) family.

It localises to the cell membrane. Functionally, probably functions as a manganese efflux pump. The protein is Putative manganese efflux pump MntP of Bacillus licheniformis (strain ATCC 14580 / DSM 13 / JCM 2505 / CCUG 7422 / NBRC 12200 / NCIMB 9375 / NCTC 10341 / NRRL NRS-1264 / Gibson 46).